A 486-amino-acid polypeptide reads, in one-letter code: Serine/threonine-protein kinase 32C (486 aa).

The segment at 1–56 (MRSGAERRGSSAAASPGSPPPGRARPAGSDAPSALPPPAAGQPRARDSGDVRSQPR) is disordered. S10, S15, and S18 each carry phosphoserine. Low complexity predominate over residues 24-33 (ARPAGSDAPS). The region spanning 93-353 (FQILRAIGKG…LQDVQAAPAL (261 aa)) is the Protein kinase domain. ATP-binding positions include 99–107 (IGKGSFGKV) and K122. D216 acts as the Proton acceptor in catalysis. Residues 396–405 (HKKKKRLAKN) show a composition bias toward basic residues. Disordered stretches follow at residues 396–419 (HKKKKRLAKNKSRDNSRDSSQSEN) and 444–486 (SQDL…AGSG).

Belongs to the protein kinase superfamily. Ser/Thr protein kinase family. Requires Mg(2+) as cofactor.

It carries out the reaction L-seryl-[protein] + ATP = O-phospho-L-seryl-[protein] + ADP + H(+). The catalysed reaction is L-threonyl-[protein] + ATP = O-phospho-L-threonyl-[protein] + ADP + H(+). This is Serine/threonine-protein kinase 32C from Homo sapiens (Human).